We begin with the raw amino-acid sequence, 222 residues long: MTNNSKICLVSLICISGIYFGYQYYQNSKPVITIYPDNLPPKIRPSIIENNQVASVYSNIYENLITQDTNIQTVKLLPDPEQPMIIDSRNQSQNDKIFDRMSTLIPLIESNNNAKNATDLNIIKLEKVIKDKVSNAQNCRSNAGYKVQLGSVKSEAEAMAEGAKIKKKFPKILKNVVITTKKVKYDDGKFFYLILAGEYSSLSQAQAVCKKLAYNKQSCVLK.

The chain crosses the membrane as a helical span at residues 7–26 (ICLVSLICISGIYFGYQYYQ). The region spanning 139-222 (CRSNAGYKVQ…AYNKQSCVLK (84 aa)) is the SPOR domain.

Its subcellular location is the membrane. This is an uncharacterized protein from Rickettsia prowazekii (strain Madrid E).